Here is an 872-residue protein sequence, read N- to C-terminus: Alanine--tRNA ligase (872 aa).

His-558, His-562, Cys-660, and His-664 together coordinate Zn(2+).

This sequence belongs to the class-II aminoacyl-tRNA synthetase family. Requires Zn(2+) as cofactor.

It is found in the cytoplasm. The catalysed reaction is tRNA(Ala) + L-alanine + ATP = L-alanyl-tRNA(Ala) + AMP + diphosphate. In terms of biological role, catalyzes the attachment of alanine to tRNA(Ala) in a two-step reaction: alanine is first activated by ATP to form Ala-AMP and then transferred to the acceptor end of tRNA(Ala). Also edits incorrectly charged Ser-tRNA(Ala) and Gly-tRNA(Ala) via its editing domain. This chain is Alanine--tRNA ligase, found in Chlamydia pneumoniae (Chlamydophila pneumoniae).